A 96-amino-acid chain; its full sequence is Ferredoxin (96 aa).

In terms of domain architecture, 2Fe-2S ferredoxin-type spans 4–94 (YKVKLLTPEG…DVVIETHKEE (91 aa)). Cys-40, Cys-45, Cys-48, and Cys-78 together coordinate [2Fe-2S] cluster.

Belongs to the 2Fe2S plant-type ferredoxin family. [2Fe-2S] cluster serves as cofactor.

It localises to the plastid. It is found in the chloroplast. Its function is as follows. Ferredoxins are iron-sulfur proteins that transfer electrons in a wide variety of metabolic reactions. The protein is Ferredoxin of Panax ginseng (Korean ginseng).